Consider the following 1380-residue polypeptide: DNA-directed RNA polymerase subunit beta (1380 aa).

The protein belongs to the RNA polymerase beta chain family. The RNAP catalytic core consists of 2 alpha, 1 beta, 1 beta' and 1 omega subunit. When a sigma factor is associated with the core the holoenzyme is formed, which can initiate transcription.

The catalysed reaction is RNA(n) + a ribonucleoside 5'-triphosphate = RNA(n+1) + diphosphate. DNA-dependent RNA polymerase catalyzes the transcription of DNA into RNA using the four ribonucleoside triphosphates as substrates. This is DNA-directed RNA polymerase subunit beta from Sinorhizobium fredii (strain NBRC 101917 / NGR234).